A 30-amino-acid chain; its full sequence is Beta/omega-theraphotoxin-Tp2a (30 aa).

Cystine bridges form between cysteine 2–cysteine 16, cysteine 9–cysteine 21, and cysteine 15–cysteine 25. The tract at residues 26 to 30 is flexible tail region important for ability to inhibit Nav channel; that stretch reads KKKLW. A hydrophobic dyad that anchors the toxin into the membrane while positioning it over the S3 helix of Nav1.7/SCN9A region spans residues 29 to 30; that stretch reads LW.

This sequence belongs to the neurotoxin 30 (phrixotoxin) family. As to expression, expressed by the venom gland.

The protein resides in the secreted. Functionally, gating-modifier toxin that targets voltage-gated sodium channels with a selective activity on Nav1.7/SCN9A (IC(50)=1-1.5 nM). It inhibits both activation and inactivation. For inhibition of activation, it is 100-fold more selective for Nav1.7/SCN9A (IC(50)=0.26-3) than for other sodium channels (Nav1.2/SCN2A (IC(50)=40-540 nM), Nav1.3/SCN3A (IC(50)=102 nM), Nav1.4/SCN4A (IC(50)=30-39 nM), Nav1.5/SCN5A (IC(50)=19-90 nM), Nav1.6/SCN8A (IC(50)=26 nM), and Nav1.8/SCN10A (IC(50)=146 nM)). For inhibition of inactivation, it is 20-fold more potent in inhibiting inactivation on Nav1.7/SCN9A (IC(50)=250 nM) than other channels (about 4.6 uM for all channels). It also weakly inhibits Cav1.2/CACNA1C and Cav3.2/CACNA1H (29% block at 1 uM). It inhibits Nav1.7/SCN9A activation by interacting with DII and impairs Nav1.7/SCN9A inactivation by interacting with DIV. It docks on top of the DII S3 helix Nav1.7/SCN9A. It is about 60-fold less active on Nav1.7/SCN9A at depolarized potential (0 mV; IC(50)=15 nM), compared to -120 mV potential (IC(50)=0.26 nM). This toxin binds to lipid membrane. This ability correlates with hNav1.7/SCN9A inhibition, showing that membrane binding is the first step in the inhibitory mechanism of this toxin. It inhibits Nav1.2/SCN2A less potently when it is coexpressed with SCN2B or SCN4B than when it is expressed alone, showing that beta subunits (SCN2B and SCN4B) have a protective effect. This chain is Beta/omega-theraphotoxin-Tp2a, found in Thrixopelma pruriens (Peruvian green velvet tarantula).